A 450-amino-acid polypeptide reads, in one-letter code: Bifunctional apoptosis regulator (450 aa).

The interval Met1–Leu20 is disordered. Topologically, residues Met1–Met140 are cytoplasmic. Residues Cys34–Arg74 form an RING-type zinc finger. The chain crosses the membrane as a helical span at residues Gly141–Val161. Residues Tyr162–Glu331 lie on the Lumenal side of the membrane. The region spanning Trp182–Leu249 is the SAM domain. The N-linked (GlcNAc...) asparagine glycan is linked to Asn232. A helical transmembrane segment spans residues Phe332–Leu352. Residues Glu353–Arg360 lie on the Cytoplasmic side of the membrane. The chain crosses the membrane as a helical span at residues Phe361 to Trp381. Residues Ser382–Gly404 are Lumenal-facing. A helical transmembrane segment spans residues Leu405 to Trp425. Over Ala426–Leu450 the chain is Cytoplasmic.

As to quaternary structure, interacts with CASP8, BCL2 and BCL2L1 through SAM domain and also with HIP1, IFT57, ESRRBL1 and BCAP31. Interacts with NGFR; this interaction inhibits NF-kappa-B and JNK-related signaling pathways. In terms of processing, mediates RING-dependent self-ubiquitination leading to proteasomal degradation. As to expression, expressed highly in brain, moderately in small intestine, weakly in testes and only faintly in liver and skeletal muscle. Not expressed in heart, kidney, lung and spleen.

It localises to the endoplasmic reticulum membrane. The enzyme catalyses S-ubiquitinyl-[E2 ubiquitin-conjugating enzyme]-L-cysteine + [acceptor protein]-L-lysine = [E2 ubiquitin-conjugating enzyme]-L-cysteine + N(6)-ubiquitinyl-[acceptor protein]-L-lysine.. Its function is as follows. Membrane-bound E3 ubiquitin ligase that plays a role in several processes including apoptosis regulation or reticulum endoplasmic stress. Has anti-apoptotic activity, both for apoptosis triggered via death-receptors and via mitochondrial factors. Contributes to the dynamic control of IRE1/ERN1 signaling during ER stress by inducing BAX inhibitor 1/TMBIM6 proteasomal degradation. Promotes the activation of TGF-beta signaling by mediating the 'Lys-63'-linked ubiquitination of TGFBR1 which is critical to activate the pathway. Together with NGFR, negatively regulates NF-kappa-B and JNK-related signaling pathways. Promotes the proteasome-mediated degradation of PNPLA3, a protein involveld in lipid metabolism. This chain is Bifunctional apoptosis regulator (BFAR), found in Homo sapiens (Human).